Here is a 510-residue protein sequence, read N- to C-terminus: Probable malate:quinone oxidoreductase (510 aa).

The protein belongs to the MQO family. Requires FAD as cofactor.

The catalysed reaction is (S)-malate + a quinone = a quinol + oxaloacetate. It functions in the pathway carbohydrate metabolism; tricarboxylic acid cycle; oxaloacetate from (S)-malate (quinone route): step 1/1. The protein is Probable malate:quinone oxidoreductase of Wigglesworthia glossinidia brevipalpis.